The sequence spans 532 residues: 5-methylcytosine-modifying enzyme 1 (532 aa).

335 to 337 (SLT) lines the L-ascorbate pocket. Residues H345, D347, and H397 each contribute to the Fe cation site. 397–399 (HGT) contributes to the L-ascorbate binding site.

Belongs to the TET family. Fe(2+) is required as a cofactor.

The protein resides in the nucleus. It catalyses the reaction a 5-methyl-2'-deoxycytidine in DNA + L-ascorbate + O2 = a (8S,9S)-5-glyceryl-2'-deoxycytidine in DNA + glyoxylate + CO2. It carries out the reaction a 5-methyl-2'-deoxycytidine in DNA + L-ascorbate + O2 = a (8S,9R)-5-glyceryl-2'-deoxycytidine in DNA + glyoxylate + CO2. Functionally, dioxygenase that catalyzes DNA modification by mediating the conversion of the modified genomic base 5-methylcytosine (5mC) into 5-glyceryl-methylcytosine (5gmC). Catalyzes the conjugation of a glyceryl moiety from L-ascorbate (vitamin C) to the methyl group of 5mC through a carbon-carbon bond. 5gmC DNA modification may be required during photosynthesis as an epigenetic mark that couteracts DNA methylation. The protein is 5-methylcytosine-modifying enzyme 1 of Chlamydomonas reinhardtii (Chlamydomonas smithii).